Reading from the N-terminus, the 237-residue chain is NAD(P)H-quinone oxidoreductase subunit K, chloroplastic (237 aa).

Residues cysteine 55, cysteine 56, cysteine 120, and cysteine 151 each contribute to the [4Fe-4S] cluster site.

The protein belongs to the complex I 20 kDa subunit family. NDH is composed of at least 16 different subunits, 5 of which are encoded in the nucleus. [4Fe-4S] cluster is required as a cofactor.

It localises to the plastid. It is found in the chloroplast thylakoid membrane. The enzyme catalyses a plastoquinone + NADH + (n+1) H(+)(in) = a plastoquinol + NAD(+) + n H(+)(out). The catalysed reaction is a plastoquinone + NADPH + (n+1) H(+)(in) = a plastoquinol + NADP(+) + n H(+)(out). In terms of biological role, NDH shuttles electrons from NAD(P)H:plastoquinone, via FMN and iron-sulfur (Fe-S) centers, to quinones in the photosynthetic chain and possibly in a chloroplast respiratory chain. The immediate electron acceptor for the enzyme in this species is believed to be plastoquinone. Couples the redox reaction to proton translocation, and thus conserves the redox energy in a proton gradient. The sequence is that of NAD(P)H-quinone oxidoreductase subunit K, chloroplastic from Nephroselmis olivacea (Green alga).